The chain runs to 224 residues: Protein DCL, chloroplastic (224 aa).

A chloroplast-targeting transit peptide spans 1-50 (MASICTSNFHFLCRKNNSSPISHHLLLSPSSLSFSRCGGLRLCRCAAVKT). The segment at 76–98 (TTSESEELVKEESDDEVGKKSGD) is disordered. The segment covering 82-98 (ELVKEESDDEVGKKSGD) has biased composition (basic and acidic residues).

It is found in the plastid. The protein resides in the chloroplast. In terms of biological role, has a function in the early stage of chloroplast development and palisade cell morphogenesis. Required for correct plastid ribosome assembly. Required for processing and maturation of 4.5S rRNA. This is Protein DCL, chloroplastic (DCL) from Solanum lycopersicum (Tomato).